A 64-amino-acid polypeptide reads, in one-letter code: Large ribosomal subunit protein uL29 (64 aa).

Belongs to the universal ribosomal protein uL29 family.

This chain is Large ribosomal subunit protein uL29 (rpl29), found in Methanothermobacter thermautotrophicus (strain ATCC 29096 / DSM 1053 / JCM 10044 / NBRC 100330 / Delta H) (Methanobacterium thermoautotrophicum).